The primary structure comprises 186 residues: Photosystem I assembly protein Ycf4 (186 aa).

The next 2 helical transmembrane spans lie at 22–42 and 57–77; these read FCWAFILFLGSLGFLLVGTSS and IIFFPQGIVMSFYGIAGLFIS.

This sequence belongs to the Ycf4 family.

It localises to the plastid. The protein localises to the chloroplast thylakoid membrane. Seems to be required for the assembly of the photosystem I complex. This chain is Photosystem I assembly protein Ycf4, found in Vitis vinifera (Grape).